We begin with the raw amino-acid sequence, 436 residues long: Adenylosuccinate synthetase (436 aa).

GTP is bound by residues 13–19 (GDEGKGK) and 41–43 (GHT). Residue Asp-14 is the Proton acceptor of the active site. Residues Asp-14 and Gly-41 each coordinate Mg(2+). IMP contacts are provided by residues 14 to 17 (DEGK), 39 to 42 (NAGH), Thr-130, Arg-144, Gln-225, Thr-240, and Arg-304. His-42 serves as the catalytic Proton donor. 300-306 (ATTGRSR) is a binding site for substrate. GTP contacts are provided by residues Arg-306, 332–334 (KLD), and 415–417 (STG).

This sequence belongs to the adenylosuccinate synthetase family. As to quaternary structure, homodimer. The cofactor is Mg(2+).

The protein resides in the cytoplasm. It carries out the reaction IMP + L-aspartate + GTP = N(6)-(1,2-dicarboxyethyl)-AMP + GDP + phosphate + 2 H(+). It participates in purine metabolism; AMP biosynthesis via de novo pathway; AMP from IMP: step 1/2. Functionally, plays an important role in the de novo pathway of purine nucleotide biosynthesis. Catalyzes the first committed step in the biosynthesis of AMP from IMP. The polypeptide is Adenylosuccinate synthetase (Hamiltonella defensa subsp. Acyrthosiphon pisum (strain 5AT)).